The following is a 1609-amino-acid chain: Laminin subunit gamma-1 (1609 aa).

The signal sequence occupies residues 1-33 (MRGSHRAAPALRPRGRLWPVLAVLAAAAAAGCA). Positions 46–285 (RPQRCMPEFV…AISDFAVGGR (240 aa)) constitute a Laminin N-terminal domain. 2 N-linked (GlcNAc...) asparagine glycosylation sites follow: asparagine 60 and asparagine 134. Intrachain disulfides connect cysteine 286–cysteine 295, cysteine 288–cysteine 305, cysteine 307–cysteine 316, cysteine 319–cysteine 339, cysteine 342–cysteine 351, cysteine 344–cysteine 367, cysteine 370–cysteine 379, cysteine 382–cysteine 395, cysteine 398–cysteine 410, cysteine 400–cysteine 416, cysteine 418–cysteine 427, cysteine 430–cysteine 442, cysteine 445–cysteine 456, cysteine 447–cysteine 463, cysteine 465–cysteine 474, and cysteine 477–cysteine 492. Laminin EGF-like domains are found at residues 286–341 (CKCN…ECLP), 342–397 (CDCN…ACSS), 398–444 (CHCS…GCRP), and 445–494 (CSCD…GCTP). The 10-residue stretch at 495-504 (CFCFGHSSVC) folds into the Laminin EGF-like 5; first part domain. The Laminin IV type A domain maps to 514 to 689 (SISSTFQIDE…PGVPATWVES (176 aa)). N-linked (GlcNAc...) asparagine glycans are attached at residues asparagine 576 and asparagine 650. The Laminin EGF-like 5; second part domain occupies 690–723 (CTCPVGYGGQFCEMCLSGYRRETPNLGPYSPCVL). Disulfide bonds link cysteine 724–cysteine 733, cysteine 726–cysteine 740, cysteine 742–cysteine 751, cysteine 754–cysteine 770, cysteine 773–cysteine 781, cysteine 775–cysteine 792, cysteine 795–cysteine 804, cysteine 807–cysteine 825, cysteine 828–cysteine 842, cysteine 830–cysteine 849, cysteine 852–cysteine 861, cysteine 864–cysteine 881, cysteine 884–cysteine 898, cysteine 886–cysteine 905, cysteine 907–cysteine 916, cysteine 919–cysteine 932, cysteine 935–cysteine 947, cysteine 937–cysteine 954, cysteine 956–cysteine 965, cysteine 968–cysteine 980, cysteine 983–cysteine 995, cysteine 985–cysteine 1001, cysteine 1003–cysteine 1012, and cysteine 1015–cysteine 1028. 6 consecutive Laminin EGF-like domains span residues 724–772 (CACN…DCQP), 773–827 (CPCP…LCRL), 828–883 (CQCS…KCKA), 884–934 (CNCN…GCER), 935–982 (CDCH…GCKP), and 983–1030 (CDCH…GCQE). 2 N-linked (GlcNAc...) asparagine glycosylation sites follow: asparagine 1022 and asparagine 1107. Residues 1030 to 1609 (ECPACYRLVK…CFNTPSIEKP (580 aa)) form a domain II and I region. The stretch at 1038–1609 (VKDKVADHRV…CFNTPSIEKP (572 aa)) forms a coiled coil. Residue serine 1149 is modified to Phosphoserine; by FAM20C. N-linked (GlcNAc...) asparagine glycosylation is found at asparagine 1161, asparagine 1175, asparagine 1205, asparagine 1223, asparagine 1241, asparagine 1380, asparagine 1395, and asparagine 1439. Serine 1493 bears the Phosphoserine mark.

Laminin is a complex glycoprotein, consisting of three different polypeptide chains (alpha, beta, gamma), which are bound to each other by disulfide bonds into a cross-shaped molecule comprising one long and three short arms with globules at each end. Gamma-1 is a subunit of laminin-1 (laminin-111 or EHS laminin), laminin-2 (laminin-211 or merosin), laminin-3 (laminin-121 or S-laminin), laminin-4 (laminin-221 or S-merosin), laminin-6 (laminin-311 or K-laminin), laminin-7 (laminin-321 or KS-laminin), laminin-8 (laminin-411), laminin-9 (laminin-421), laminin-10 (laminin-511) and laminin-11 (laminin-521). Interacts with SVEP1. In terms of tissue distribution, found in the basement membranes (major component).

It is found in the secreted. The protein resides in the extracellular space. Its subcellular location is the extracellular matrix. It localises to the basement membrane. Its function is as follows. Binding to cells via a high affinity receptor, laminin is thought to mediate the attachment, migration and organization of cells into tissues during embryonic development by interacting with other extracellular matrix components. This chain is Laminin subunit gamma-1, found in Homo sapiens (Human).